The sequence spans 587 residues: A-type ATP synthase subunit A (587 aa).

234-241 (GPFGSGKT) is an ATP binding site.

Belongs to the ATPase alpha/beta chains family. As to quaternary structure, the N-terminus (approximately residues 106-122) interacts with subunit H. Has multiple subunits with at least A(3), B(3), C, D, E(1 or 2), F, H(2), I and proteolipid K(x).

It is found in the cell membrane. It carries out the reaction ATP + H2O + 4 H(+)(in) = ADP + phosphate + 5 H(+)(out). Its activity is regulated as follows. ATP hydrolysis is inhibited by N',N'-dicyclohexylcarbodiimide. Functionally, component of the A-type ATP synthase that produces ATP from ADP in the presence of a proton gradient across the membrane. The A chain is the catalytic subunit. Hydrolyzes ATP, GTP (86% of ATPase rate) and UTP (54% of ATPase rate), has very poor activity on CTP. The protein is A-type ATP synthase subunit A of Methanocaldococcus jannaschii (strain ATCC 43067 / DSM 2661 / JAL-1 / JCM 10045 / NBRC 100440) (Methanococcus jannaschii).